A 505-amino-acid chain; its full sequence is Protein disulfide-isomerase (505 aa).

Positions 1–20 are cleaved as a signal peptide; sequence MHKAQKFALGLLAAAAVATA. 2 Thioredoxin domains span residues 21-128 and 335-465; these read SDVV…QSLP and FVAG…ENGK. Catalysis depends on nucleophile residues C50, C53, C385, and C388. 2 disulfides stabilise this stretch: C50/C53 and C385/C388. The segment at 470-505 is disordered; sequence ISEDAEETSSATETTTETATKSEEAAKETATEHDEL. A compositionally biased stretch (low complexity) spans 477-488; that stretch reads TSSATETTTETA. The span at 489 to 505 shows a compositional bias: basic and acidic residues; that stretch reads TKSEEAAKETATEHDEL. Residues 502–505 carry the Prevents secretion from ER motif; sequence HDEL.

It belongs to the protein disulfide isomerase family.

Its subcellular location is the endoplasmic reticulum lumen. It catalyses the reaction Catalyzes the rearrangement of -S-S- bonds in proteins.. Participates in the folding of proteins containing disulfide bonds, may be involved in glycosylation, prolyl hydroxylation and triglyceride transfer. This chain is Protein disulfide-isomerase, found in Humicola insolens (Soft-rot fungus).